A 287-amino-acid polypeptide reads, in one-letter code: Pantothenate synthetase (287 aa).

Position 30-37 (Met-30–His-37) interacts with ATP. The active-site Proton donor is His-37. Gln-61 contributes to the (R)-pantoate binding site. Residue Gln-61 participates in beta-alanine binding. An ATP-binding site is contributed by Gly-152–Asp-155. Gln-158 is a (R)-pantoate binding site. ATP is bound by residues Ile-181 and Glu-189–Arg-192.

It belongs to the pantothenate synthetase family. As to quaternary structure, homodimer.

It localises to the cytoplasm. It catalyses the reaction (R)-pantoate + beta-alanine + ATP = (R)-pantothenate + AMP + diphosphate + H(+). It functions in the pathway cofactor biosynthesis; (R)-pantothenate biosynthesis; (R)-pantothenate from (R)-pantoate and beta-alanine: step 1/1. Its function is as follows. Catalyzes the condensation of pantoate with beta-alanine in an ATP-dependent reaction via a pantoyl-adenylate intermediate. This is Pantothenate synthetase from Corynebacterium efficiens (strain DSM 44549 / YS-314 / AJ 12310 / JCM 11189 / NBRC 100395).